Consider the following 489-residue polypeptide: Cysteine--tRNA ligase (489 aa).

Cys29 contacts Zn(2+). The 'HIGH' region motif lies at 31–41 (VTVYDYCHLGH). 3 residues coordinate Zn(2+): Cys215, His240, and Glu244. The short motif at 272–276 (KMSKS) is the 'KMSKS' region element. Lys275 lines the ATP pocket.

This sequence belongs to the class-I aminoacyl-tRNA synthetase family. In terms of assembly, monomer. Zn(2+) is required as a cofactor.

It is found in the cytoplasm. The catalysed reaction is tRNA(Cys) + L-cysteine + ATP = L-cysteinyl-tRNA(Cys) + AMP + diphosphate. The chain is Cysteine--tRNA ligase from Trichodesmium erythraeum (strain IMS101).